The primary structure comprises 235 residues: Modulator of macroautophagy TMEM150B (235 aa).

Topologically, residues 1–8 (MWGYLSLL) are cytoplasmic. The chain crosses the membrane as a helical span at residues 9–29 (PMCLAFWAIAGIWTVFSLAVV). The Extracellular portion of the chain corresponds to 30–51 (NKAVNLTDGFPYISVCGNVPPQ). Residue asparagine 34 is glycosylated (N-linked (GlcNAc...) asparagine). A helical membrane pass occupies residues 52–72 (SCIFSQVLNIGAASAAWICIL). The Cytoplasmic segment spans residues 73–88 (RYYQLRDWGVRKWHNQ). The chain crosses the membrane as a helical span at residues 89–109 (VILWTGLLCALGTSIVGNFQE). Residues 110-116 (KNQRATH) lie on the Extracellular side of the membrane. The helical transmembrane segment at 117-137 (LTGAFLAFFVGIVYFWLQLFL) threads the bilayer. At 138–156 (SWRMKNLPQPGAPWIGPLR) the chain is on the cytoplasmic side. The helical transmembrane segment at 157–177 (LVLCSACFILEVAMVVLHSWS) threads the bilayer. Residues 178–180 (MRS) are Extracellular-facing. A helical membrane pass occupies residues 181–201 (VSAICEWVAAMLLFILFGLLA). Topologically, residues 202–235 (VDFSRLDSCTLCLQPGSGSLRPPPDSPTSLHVQL) are cytoplasmic.

The protein belongs to the DRAM/TMEM150 family.

The protein localises to the cell membrane. Its subcellular location is the endosome membrane. It localises to the cytoplasmic vesicle. It is found in the autophagosome membrane. Modulator of macroautophagy that causes accumulation of autophagosomes under basal conditions and enhances autophagic flux. Represses cell death and promotes long-term clonogenic survival of cells grown in the absence of glucose in a macroautophagy-independent manner. May have some role in extracellular matrix engulfment or growth factor receptor recycling, both of which can modulate cell survival. The protein is Modulator of macroautophagy TMEM150B of Bos taurus (Bovine).